Here is a 450-residue protein sequence, read N- to C-terminus: Phosphoglucosamine mutase (450 aa).

Serine 101 acts as the Phosphoserine intermediate in catalysis. Residues serine 101, aspartate 240, aspartate 242, and aspartate 244 each contribute to the Mg(2+) site. Serine 101 bears the Phosphoserine mark.

It belongs to the phosphohexose mutase family. The cofactor is Mg(2+). Post-translationally, activated by phosphorylation.

The enzyme catalyses alpha-D-glucosamine 1-phosphate = D-glucosamine 6-phosphate. Functionally, catalyzes the conversion of glucosamine-6-phosphate to glucosamine-1-phosphate. The chain is Phosphoglucosamine mutase from Streptococcus thermophilus (strain CNRZ 1066).